A 277-amino-acid chain; its full sequence is Energy-coupling factor transporter ATP-binding protein EcfA (277 aa).

Positions 4–238 constitute an ABC transporter domain; sequence LETRDLTHIY…PELLTQTRLD (235 aa). 37–44 is a binding site for ATP; it reads GPNGAGKS.

Belongs to the ABC transporter superfamily. Energy-coupling factor EcfA family. As to quaternary structure, forms a stable energy-coupling factor (ECF) transporter complex composed of 2 membrane-embedded substrate-binding proteins (S component), 2 ATP-binding proteins (A component) and 2 transmembrane proteins (T component).

The protein localises to the cell membrane. Functionally, ATP-binding (A) component of a common energy-coupling factor (ECF) ABC-transporter complex. Unlike classic ABC transporters this ECF transporter provides the energy necessary to transport a number of different substrates. The polypeptide is Energy-coupling factor transporter ATP-binding protein EcfA (Methanoculleus marisnigri (strain ATCC 35101 / DSM 1498 / JR1)).